Consider the following 239-residue polypeptide: MKNNIITPRYNLEGVFLRQIHSFVCRKGRTTTSQLSAIKKYWSLIGVDFQLNALNFSSIFKHRAPIILEIGFGSGESLVKTAMNFPEKNFLGIEVYKSGIGSCLHYASSYQIQNLRIIYYDATEVMYNMIPDDTLSKVQIFFPDPWHKKRHHKRRLLKNIFLKIITKKLIIDGILHIATDSESYAFYILDEIKDIKNYKNLSEKNNFVKRPVSRIITKFEKKGLLQGKKIFDLMFQLKK.

Positions 69, 94, 121, and 144 each coordinate S-adenosyl-L-methionine. The active site involves aspartate 144. Residues lysine 148, aspartate 180, and 217 to 220 (TKFE) each bind substrate.

It belongs to the class I-like SAM-binding methyltransferase superfamily. TrmB family. Monomer.

The enzyme catalyses guanosine(46) in tRNA + S-adenosyl-L-methionine = N(7)-methylguanosine(46) in tRNA + S-adenosyl-L-homocysteine. It functions in the pathway tRNA modification; N(7)-methylguanine-tRNA biosynthesis. Catalyzes the formation of N(7)-methylguanine at position 46 (m7G46) in tRNA. This is tRNA (guanine-N(7)-)-methyltransferase from Buchnera aphidicola subsp. Acyrthosiphon pisum (strain 5A).